We begin with the raw amino-acid sequence, 357 residues long: Major outer membrane protein P.IB (357 aa).

A signal peptide spans 1 to 19 (MKKSLIALTLAALPVAAMA).

It belongs to the Gram-negative porin family. Homotrimer.

It localises to the cell outer membrane. Functionally, serves as a slightly cation selective porin. In Neisseria sicca, this protein is Major outer membrane protein P.IB (por).